Consider the following 443-residue polypeptide: Endothelin receptor type B (443 aa).

A signal peptide spans 1–26 (MQPLPTLCGRVLVALILACGVAGVQG). Residues 27–102 (EERRFPPARA…RTIEIKETFK (76 aa)) are Extracellular-facing. The span at 51 to 62 (TKTSWPTGSNAS) shows a compositional bias: polar residues. Residues 51 to 89 (TKTSWPTGSNASVPRLSAPPQMPKAGRTAGAQRRTLPPP) are disordered. A glycan (N-linked (GlcNAc...) asparagine) is linked at Asn-60. The helical transmembrane segment at 103-127 (YINTVVSCLVFVLGIIGNSTLLRII) threads the bilayer. The Cytoplasmic segment spans residues 128–138 (YKNKCMRNGPN). Residues 139-164 (ILIASLALGDLLHIIIDIPINVYKLL) traverse the membrane as a helical segment. Residues 165–176 (AEDWPFGVEMCK) lie on the Extracellular side of the membrane. A disulfide bridge connects residues Cys-175 and Cys-256. Residues 177 to 198 (LVPFIQKASVGITVLSLCALSI) form a helical membrane-spanning segment. Topologically, residues 199 to 219 (DRYRAVASWSRIKGIGVPKWT) are cytoplasmic. The chain crosses the membrane as a helical span at residues 220–244 (AVEIVLIWVVSVVLAVPEAVGFDMI). Residues 245–272 (TADYKGSYLRICLLHPTQKTAFMQFYKN) are Extracellular-facing. The helical transmembrane segment at 273–297 (AKDWWLFSFYFCLPLAITAFFYTLE) threads the bilayer. Residues 298–325 (TCEMLRKKSGMQIALNDHLKQRREVAKT) lie on the Cytoplasmic side of the membrane. Phosphoserine is present on Ser-306. Residues 326–351 (VFCLVLVFALCWLPLHLSRILKHTLY) traverse the membrane as a helical segment. Residues 352-363 (DQNDPHRCELLS) are Extracellular-facing. Residues 364–390 (FLLVLEYIGINMASLNSCINPIALYLV) form a helical membrane-spanning segment. The Cytoplasmic segment spans residues 391-443 (SKRFKNCFKWCLCCWCQSFEEKQSLEDKQSCLKFKANDHGYDNFRSSNKYSSS). Residues Cys-403, Cys-404, and Cys-406 are each lipidated (S-palmitoyl cysteine). Ser-420 carries the phosphoserine modification. The residue at position 440 (Tyr-440) is a Phosphotyrosine. 3 positions are modified to phosphoserine: Ser-441, Ser-442, and Ser-443.

The protein belongs to the G-protein coupled receptor 1 family. Endothelin receptor subfamily. EDNRB sub-subfamily.

It is found in the cell membrane. Non-specific receptor for endothelin 1, 2, and 3. Mediates its action by association with G proteins that activate a phosphatidylinositol-calcium second messenger system. This chain is Endothelin receptor type B (EDNRB), found in Equus caballus (Horse).